Reading from the N-terminus, the 502-residue chain is MYRQAKWDEPLIFELSRPGRVGYTLPKPIEDVDVEIPEKLKRKSPLNLPEVSEPEVVKHYTRLSEMNYGVDSGIYPLGSCTMKYNPKINEELAGHPKVAYIHPYQDERTVQGALRIMWELEQWLKEITGMDRFTLQPAAGANGEFTGVMIIKAYHLDRGETQRNEMLVPDSAHGTNPASAAMAGFKVIEIPSNENGTVDLEALENAVSERTAGLMLTNPNTLGIFEDEIEEIAKIVHKAGGLLYYDGANLNGILGKVRPGDMGFDIVHLNLHKTFSTPHGGGGPGAGPVGVKEFLKDYLPVPLVSYDEENDRYYLDYDVPKSIGKVKELFGNFAVLVRALTYLKVMGKDGLREVSEVAVLNANYLARKLKGTRGYELPHKELRKHEVVFSAEPMKRETGVRTLDVAKRLLDFGMHAPTIYFPLIVHEALMIEPTETVSKEELDAYVEAMKKISEEAYTNPEVVKSAPHNTAVRRVDDVLASKKPIITWKMYKELKEKGEVDY.

Residue lysine 273 is modified to N6-(pyridoxal phosphate)lysine.

It belongs to the GcvP family. C-terminal subunit subfamily. As to quaternary structure, the glycine cleavage system is composed of four proteins: P, T, L and H. In this organism, the P 'protein' is a heterodimer of two subunits. Requires pyridoxal 5'-phosphate as cofactor.

It catalyses the reaction N(6)-[(R)-lipoyl]-L-lysyl-[glycine-cleavage complex H protein] + glycine + H(+) = N(6)-[(R)-S(8)-aminomethyldihydrolipoyl]-L-lysyl-[glycine-cleavage complex H protein] + CO2. In terms of biological role, the glycine cleavage system catalyzes the degradation of glycine. The P protein binds the alpha-amino group of glycine through its pyridoxal phosphate cofactor; CO(2) is released and the remaining methylamine moiety is then transferred to the lipoamide cofactor of the H protein. This Pyrococcus abyssi (strain GE5 / Orsay) protein is Probable glycine dehydrogenase (decarboxylating) subunit 2.